The chain runs to 398 residues: Succinate--CoA ligase [ADP-forming] subunit beta (398 aa).

Residues 9 to 254 enclose the ATP-grasp domain; sequence KAVLREFGVP…ETEEDAKEIE (246 aa). ATP contacts are provided by residues K46, 53 to 55, E109, S112, and E117; that span reads GRG. N209 and D223 together coordinate Mg(2+). Substrate is bound by residues N274 and 331-333; that span reads GIM.

The protein belongs to the succinate/malate CoA ligase beta subunit family. Heterotetramer of two alpha and two beta subunits. The cofactor is Mg(2+).

It carries out the reaction succinate + ATP + CoA = succinyl-CoA + ADP + phosphate. It catalyses the reaction GTP + succinate + CoA = succinyl-CoA + GDP + phosphate. Its pathway is carbohydrate metabolism; tricarboxylic acid cycle; succinate from succinyl-CoA (ligase route): step 1/1. Functionally, succinyl-CoA synthetase functions in the citric acid cycle (TCA), coupling the hydrolysis of succinyl-CoA to the synthesis of either ATP or GTP and thus represents the only step of substrate-level phosphorylation in the TCA. The beta subunit provides nucleotide specificity of the enzyme and binds the substrate succinate, while the binding sites for coenzyme A and phosphate are found in the alpha subunit. This is Succinate--CoA ligase [ADP-forming] subunit beta from Rhodopseudomonas palustris (strain ATCC BAA-98 / CGA009).